Here is a 207-residue protein sequence, read N- to C-terminus: Small ribosomal subunit protein uS4 (207 aa).

Residues 22-54 (KSARRSISDKSKFESKPGQHGRTSGSRTSDFGL) are disordered. A compositionally biased stretch (basic and acidic residues) spans 27-38 (SISDKSKFESKP). Positions 42-52 (GRTSGSRTSDF) are enriched in polar residues. Positions 97 to 157 (SRLDNVVYRM…EKSKKQLRII (61 aa)) constitute an S4 RNA-binding domain.

It belongs to the universal ribosomal protein uS4 family. As to quaternary structure, part of the 30S ribosomal subunit. Contacts protein S5. The interaction surface between S4 and S5 is involved in control of translational fidelity.

One of the primary rRNA binding proteins, it binds directly to 16S rRNA where it nucleates assembly of the body of the 30S subunit. Its function is as follows. With S5 and S12 plays an important role in translational accuracy. The chain is Small ribosomal subunit protein uS4 from Leptothrix cholodnii (strain ATCC 51168 / LMG 8142 / SP-6) (Leptothrix discophora (strain SP-6)).